The primary structure comprises 365 residues: Probable L-tyrosine/L-aspartate decarboxylase (365 aa).

Lysine 225 bears the N6-(pyridoxal phosphate)lysine mark.

The protein belongs to the group II decarboxylase family. MfnA subfamily. The cofactor is pyridoxal 5'-phosphate.

The catalysed reaction is L-tyrosine + H(+) = tyramine + CO2. It carries out the reaction L-aspartate + H(+) = beta-alanine + CO2. The protein operates within cofactor biosynthesis; methanofuran biosynthesis. It functions in the pathway cofactor biosynthesis; coenzyme A biosynthesis. Functionally, catalyzes the decarboxylation of L-tyrosine to produce tyramine for methanofuran biosynthesis. Can also catalyze the decarboxylation of L-aspartate to produce beta-alanine for coenzyme A (CoA) biosynthesis. The polypeptide is Probable L-tyrosine/L-aspartate decarboxylase (Methanocorpusculum labreanum (strain ATCC 43576 / DSM 4855 / Z)).